The chain runs to 560 residues: NAD-dependent malic enzyme (560 aa).

Y100 acts as the Proton donor in catalysis. Residue R153 coordinates NAD(+). The active-site Proton acceptor is the K171. A divalent metal cation contacts are provided by E242, D243, and D266. 2 residues coordinate NAD(+): D266 and N413.

Belongs to the malic enzymes family. As to quaternary structure, homotetramer. It depends on Mg(2+) as a cofactor. Mn(2+) is required as a cofactor.

The catalysed reaction is (S)-malate + NAD(+) = pyruvate + CO2 + NADH. It catalyses the reaction oxaloacetate + H(+) = pyruvate + CO2. The protein is NAD-dependent malic enzyme of Psychromonas ingrahamii (strain DSM 17664 / CCUG 51855 / 37).